The chain runs to 311 residues: Aspartate carbamoyltransferase catalytic subunit (311 aa).

Residues R55 and T56 each contribute to the carbamoyl phosphate site. K85 serves as a coordination point for L-aspartate. Residues R106, H135, and Q138 each coordinate carbamoyl phosphate. L-aspartate is bound by residues R168 and R230. The carbamoyl phosphate site is built by L268 and P269.

It belongs to the aspartate/ornithine carbamoyltransferase superfamily. ATCase family. In terms of assembly, heterododecamer (2C3:3R2) of six catalytic PyrB chains organized as two trimers (C3), and six regulatory PyrI chains organized as three dimers (R2).

It catalyses the reaction carbamoyl phosphate + L-aspartate = N-carbamoyl-L-aspartate + phosphate + H(+). Its pathway is pyrimidine metabolism; UMP biosynthesis via de novo pathway; (S)-dihydroorotate from bicarbonate: step 2/3. Functionally, catalyzes the condensation of carbamoyl phosphate and aspartate to form carbamoyl aspartate and inorganic phosphate, the committed step in the de novo pyrimidine nucleotide biosynthesis pathway. This chain is Aspartate carbamoyltransferase catalytic subunit, found in Proteus mirabilis (strain HI4320).